We begin with the raw amino-acid sequence, 277 residues long: C2H2-type zinc-finger transcription factor (277 aa).

Disordered stretches follow at residues 23–66 (PTMN…AHPP) and 78–146 (MNEP…TDSI). Over residues 27–37 (EIETTDNTYPR) the composition is skewed to polar residues. The segment at 185–208 (HPCPDCGRVFTRSTARNFHRQSGT) adopts a C2H2-type; degenerate zinc-finger fold.

The protein belongs to the GLI C2H2-type zinc-finger protein family.

The protein resides in the nucleus. In terms of biological role, C2H2-type zinc-finger transcription factor that controls the expression of the nonribosomal peptide synthases inpA and inpB, as well as of the other inp cluster-associated genes. Also mediates the expression of the asperfuranone biosynthesis gene cluster by binding to the afoA promoter. Probably recognizes the 5'-CT/C/AAAAGGAT/AT/GG/CA-3' motif in the promoters of teget genes. The chain is C2H2-type zinc-finger transcription factor from Emericella nidulans (strain FGSC A4 / ATCC 38163 / CBS 112.46 / NRRL 194 / M139) (Aspergillus nidulans).